The chain runs to 337 residues: Glyceraldehyde-3-phosphate dehydrogenase (337 aa).

NAD(+) contacts are provided by residues 13–14 (RI), Asp35, and Arg80. D-glyceraldehyde 3-phosphate is bound by residues 150–152 (SCT), Thr181, 210–211 (TG), and Arg233. Cys151 functions as the Nucleophile in the catalytic mechanism. Asn315 serves as a coordination point for NAD(+).

Belongs to the glyceraldehyde-3-phosphate dehydrogenase family. Homotetramer.

The protein resides in the cytoplasm. The enzyme catalyses D-glyceraldehyde 3-phosphate + phosphate + NAD(+) = (2R)-3-phospho-glyceroyl phosphate + NADH + H(+). The protein operates within carbohydrate degradation; glycolysis; pyruvate from D-glyceraldehyde 3-phosphate: step 1/5. The chain is Glyceraldehyde-3-phosphate dehydrogenase (GPDA) from Colletotrichum lindemuthianum (Bean anthracnose fungus).